A 323-amino-acid chain; its full sequence is RNA polymerase sigma factor SigB (323 aa).

A sufficient to interact with RbpA region spans residues 1–228 (MADAPTRATT…DMPVGSEEEA (228 aa)). Residues 25–59 (DLVRVYLNGIGKTALLNAAGEVELAKRIEAGLYAE) form a sigma-70 factor domain-1 region. The interval 90–160 (LLEANLRLVV…TRGMADQSRT (71 aa)) is sigma-70 factor domain-2. Residues 114–117 (DLIQ) carry the Polymerase core binding motif. A sigma-70 factor domain-3 region spans residues 169–245 (EQVNKLARIK…DAEAMSAENA (77 aa)). The tract at residues 258 to 311 (VLATLDEREHQVIRLRFGLDDGQPRTLDQIGKLFGLSRERVRQIERDVMSKLRH) is sigma-70 factor domain-4. The segment at residues 284-303 (LDQIGKLFGLSRERVRQIER) is a DNA-binding region (H-T-H motif).

This sequence belongs to the sigma-70 factor family. In terms of assembly, monomer. Interacts transiently with the RNA polymerase catalytic core formed by RpoA, RpoB, RpoC and RpoZ (2 alpha, 1 beta, 1 beta' and 1 omega subunit) to form the RNA polymerase holoenzyme that can initiate transcription.

In terms of biological role, sigma factors are initiation factors that promote the attachment of RNA polymerase to specific initiation sites and are then released. A non-essential principal sigma factor that responds to cell envelope stress and hypoxia. This chain is RNA polymerase sigma factor SigB (sigB), found in Mycobacterium tuberculosis (strain CDC 1551 / Oshkosh).